We begin with the raw amino-acid sequence, 403 residues long: 3-hydroxy-3-methylglutaryl-coenzyme A reductase (403 aa).

Active-site charge relay system residues include Glu99 and Asp303. His398 acts as the Proton donor in catalysis.

It belongs to the HMG-CoA reductase family.

It catalyses the reaction (R)-mevalonate + 2 NADP(+) + CoA = (3S)-3-hydroxy-3-methylglutaryl-CoA + 2 NADPH + 2 H(+). It participates in metabolic intermediate biosynthesis; (R)-mevalonate biosynthesis; (R)-mevalonate from acetyl-CoA: step 3/3. With respect to regulation, is competitively inhibited by (R)-HMG-CoA and lovastatin (formerly called mevinolin). Functionally, catalyzes the NADPH-dependent reductive deacylation of (S)-3-hydroxy-3-methylglutaryl-CoA (HMG-CoA) to (R)-mevalonate. Functions in the mevalonate (MVA) pathway leading to isopentenyl diphosphate (IPP), a key precursor for the biosynthesis of isoprenoid compounds such as archaeal membrane lipids. Is also able to catalyze the reduction of mevaldehyde to mevalonate and the oxidative acylation of mevaldehyde to HMG-CoA. The chain is 3-hydroxy-3-methylglutaryl-coenzyme A reductase (hmgA) from Haloferax volcanii (strain ATCC 29605 / DSM 3757 / JCM 8879 / NBRC 14742 / NCIMB 2012 / VKM B-1768 / DS2) (Halobacterium volcanii).